Consider the following 265-residue polypeptide: Translation initiation factor 2 subunit alpha (265 aa).

The S1 motif domain occupies 12 to 83 (GELIIGTVYK…KKGHVDASLK (72 aa)).

Belongs to the eIF-2-alpha family. In terms of assembly, heterotrimer composed of an alpha, a beta and a gamma chain.

Functionally, eIF-2 functions in the early steps of protein synthesis by forming a ternary complex with GTP and initiator tRNA. The polypeptide is Translation initiation factor 2 subunit alpha (Methanobrevibacter smithii (strain ATCC 35061 / DSM 861 / OCM 144 / PS)).